We begin with the raw amino-acid sequence, 334 residues long: Glyoxylate reductase (334 aa).

NADP(+) contacts are provided by residues 158-161 (FGRI), 180-182 (SRT), and 239-241 (IAR). Residues arginine 241 and glutamate 270 contribute to the active site. Histidine 288 (proton donor) is an active-site residue. 288-290 (HIG) provides a ligand contact to NADP(+).

Belongs to the D-isomer specific 2-hydroxyacid dehydrogenase family. GyaR subfamily. Homodimer.

The protein localises to the cytoplasm. It carries out the reaction glycolate + NAD(+) = glyoxylate + NADH + H(+). This Thermococcus gammatolerans (strain DSM 15229 / JCM 11827 / EJ3) protein is Glyoxylate reductase.